The chain runs to 755 residues: Catalase-peroxidase (755 aa).

The segment at residues 91-245 (WHSAGTYRTA…LAAVQMGLIY (155 aa)) is a cross-link (tryptophyl-tyrosyl-methioninium (Trp-Tyr) (with M-271)). Catalysis depends on histidine 92, which acts as the Proton acceptor. The disordered stretch occupies residues 193 to 229 (DNRYGKDPESMQPPGEGTLVAEPAEHGNEESRTNQGE). Residues 215-224 (PAEHGNEESR) show a composition bias toward basic and acidic residues. The segment at residues 245–271 (YVNPEGPEGNPDPVASAKDIRETFGRM) is a cross-link (tryptophyl-tyrosyl-methioninium (Tyr-Met) (with W-91)). Histidine 286 is a heme binding site.

Belongs to the peroxidase family. Peroxidase/catalase subfamily. As to quaternary structure, homodimer or homotetramer. The cofactor is heme b. In terms of processing, formation of the three residue Trp-Tyr-Met cross-link is important for the catalase, but not the peroxidase activity of the enzyme.

It carries out the reaction H2O2 + AH2 = A + 2 H2O. The enzyme catalyses 2 H2O2 = O2 + 2 H2O. Functionally, bifunctional enzyme with both catalase and broad-spectrum peroxidase activity. In Pseudomonas fluorescens (strain Pf0-1), this protein is Catalase-peroxidase.